Consider the following 438-residue polypeptide: GTPase Der (438 aa).

EngA-type G domains follow at residues 4-168 (PIVA…NDPS) and 177-352 (IRIA…DNYS). GTP contacts are provided by residues 10–17 (GRPNVGKS), 57–61 (DTGGI), 120–123 (NKID), 183–190 (GKPNVGKS), 230–234 (DTAGL), and 295–298 (NKWD). The KH-like domain occupies 353–437 (KRVSTGLLND…GIEIEYRARK (85 aa)).

This sequence belongs to the TRAFAC class TrmE-Era-EngA-EngB-Septin-like GTPase superfamily. EngA (Der) GTPase family. In terms of assembly, associates with the 50S ribosomal subunit.

Its function is as follows. GTPase that plays an essential role in the late steps of ribosome biogenesis. The chain is GTPase Der from Clostridium perfringens (strain ATCC 13124 / DSM 756 / JCM 1290 / NCIMB 6125 / NCTC 8237 / Type A).